Here is a 631-residue protein sequence, read N- to C-terminus: 1-deoxy-D-xylulose-5-phosphate synthase (631 aa).

Thiamine diphosphate contacts are provided by residues H74 and 115–117 (GHS). D146 provides a ligand contact to Mg(2+). Thiamine diphosphate-binding positions include 147–148 (GA), N175, Y286, and E368. N175 is a binding site for Mg(2+).

This sequence belongs to the transketolase family. DXPS subfamily. In terms of assembly, homodimer. Mg(2+) serves as cofactor. Requires thiamine diphosphate as cofactor.

The catalysed reaction is D-glyceraldehyde 3-phosphate + pyruvate + H(+) = 1-deoxy-D-xylulose 5-phosphate + CO2. It participates in metabolic intermediate biosynthesis; 1-deoxy-D-xylulose 5-phosphate biosynthesis; 1-deoxy-D-xylulose 5-phosphate from D-glyceraldehyde 3-phosphate and pyruvate: step 1/1. Functionally, catalyzes the acyloin condensation reaction between C atoms 2 and 3 of pyruvate and glyceraldehyde 3-phosphate to yield 1-deoxy-D-xylulose-5-phosphate (DXP). This is 1-deoxy-D-xylulose-5-phosphate synthase from Natranaerobius thermophilus (strain ATCC BAA-1301 / DSM 18059 / JW/NM-WN-LF).